The sequence spans 466 residues: Adenosylhomocysteinase (466 aa).

Residues T57, D132, and E192 each contribute to the substrate site. Residue 193–195 (TTT) participates in NAD(+) binding. Substrate-binding residues include K222 and D226. Residues N227, 256–261 (GYGDVG), E279, N314, 335–337 (IGH), and N380 each bind NAD(+).

It belongs to the adenosylhomocysteinase family. It depends on NAD(+) as a cofactor.

The protein localises to the cytoplasm. It catalyses the reaction S-adenosyl-L-homocysteine + H2O = L-homocysteine + adenosine. The protein operates within amino-acid biosynthesis; L-homocysteine biosynthesis; L-homocysteine from S-adenosyl-L-homocysteine: step 1/1. May play a key role in the regulation of the intracellular concentration of adenosylhomocysteine. This Rhizobium rhizogenes (strain K84 / ATCC BAA-868) (Agrobacterium radiobacter) protein is Adenosylhomocysteinase.